Reading from the N-terminus, the 194-residue chain is Adenylate kinase (194 aa).

An ATP-binding site is contributed by Gly10 to Thr15. An NMP region spans residues Ser30 to Val59. AMP contacts are provided by residues Thr31, Arg36, Glu57 to Val59, Gly85 to Arg88, and Gln92. The segment at Lys126–Asp142 is LID. Arg127 serves as a coordination point for ATP. Residues Arg139 and Arg150 each contribute to the AMP site. Ala178 contacts ATP.

This sequence belongs to the adenylate kinase family. Monomer.

The protein localises to the cytoplasm. The enzyme catalyses AMP + ATP = 2 ADP. Its pathway is purine metabolism; AMP biosynthesis via salvage pathway; AMP from ADP: step 1/1. Its function is as follows. Catalyzes the reversible transfer of the terminal phosphate group between ATP and AMP. Plays an important role in cellular energy homeostasis and in adenine nucleotide metabolism. The sequence is that of Adenylate kinase from Chelativorans sp. (strain BNC1).